Here is a 235-residue protein sequence, read N- to C-terminus: Thiamine import ATP-binding protein ThiQ (235 aa).

Positions 2–230 constitute an ABC transporter domain; that stretch reads LKLIDITWLY…QASASALLGI (229 aa). Residue 32-39 coordinates ATP; the sequence is GPSGAGKS.

Belongs to the ABC transporter superfamily. Thiamine importer (TC 3.A.1.19.1) family. As to quaternary structure, the complex is composed of two ATP-binding proteins (ThiQ), two transmembrane proteins (ThiP) and a solute-binding protein (ThiB).

The protein resides in the cell inner membrane. The enzyme catalyses thiamine(out) + ATP + H2O = thiamine(in) + ADP + phosphate + H(+). Part of the ABC transporter complex ThiBPQ involved in thiamine import. Responsible for energy coupling to the transport system. Is also involved in thiamine pyrophosphate (TPP) transport. This Salmonella typhimurium (strain LT2 / SGSC1412 / ATCC 700720) protein is Thiamine import ATP-binding protein ThiQ.